Consider the following 96-residue polypeptide: Aspartyl/glutamyl-tRNA(Asn/Gln) amidotransferase subunit C (96 aa).

Belongs to the GatC family. In terms of assembly, heterotrimer of A, B and C subunits.

It catalyses the reaction L-glutamyl-tRNA(Gln) + L-glutamine + ATP + H2O = L-glutaminyl-tRNA(Gln) + L-glutamate + ADP + phosphate + H(+). The enzyme catalyses L-aspartyl-tRNA(Asn) + L-glutamine + ATP + H2O = L-asparaginyl-tRNA(Asn) + L-glutamate + ADP + phosphate + 2 H(+). Functionally, allows the formation of correctly charged Asn-tRNA(Asn) or Gln-tRNA(Gln) through the transamidation of misacylated Asp-tRNA(Asn) or Glu-tRNA(Gln) in organisms which lack either or both of asparaginyl-tRNA or glutaminyl-tRNA synthetases. The reaction takes place in the presence of glutamine and ATP through an activated phospho-Asp-tRNA(Asn) or phospho-Glu-tRNA(Gln). The sequence is that of Aspartyl/glutamyl-tRNA(Asn/Gln) amidotransferase subunit C from Sulfurovum sp. (strain NBC37-1).